A 253-amino-acid chain; its full sequence is ATP synthase subunit b 1 (253 aa).

Residues 2 to 22 (LIDWFTVIAELVNFLILVWLL) form a helical membrane-spanning segment.

It belongs to the ATPase B chain family. In terms of assembly, F-type ATPases have 2 components, F(1) - the catalytic core - and F(0) - the membrane proton channel. F(1) has five subunits: alpha(3), beta(3), gamma(1), delta(1), epsilon(1). F(0) has four main subunits: a(1), b(2) and c(10-14). The alpha and beta chains form an alternating ring which encloses part of the gamma chain. F(1) is attached to F(0) by a central stalk formed by the gamma and epsilon chains, while a peripheral stalk is formed by the delta and b chains.

The protein resides in the cell inner membrane. F(1)F(0) ATP synthase produces ATP from ADP in the presence of a proton or sodium gradient. F-type ATPases consist of two structural domains, F(1) containing the extramembraneous catalytic core and F(0) containing the membrane proton channel, linked together by a central stalk and a peripheral stalk. During catalysis, ATP synthesis in the catalytic domain of F(1) is coupled via a rotary mechanism of the central stalk subunits to proton translocation. Functionally, component of the F(0) channel, it forms part of the peripheral stalk, linking F(1) to F(0). In Prosthecochloris aestuarii (strain DSM 271 / SK 413), this protein is ATP synthase subunit b 1.